The following is a 169-amino-acid chain: Large ribosomal subunit protein uL15 (169 aa).

The tract at residues 20–56 (GRGIGSGKGKTGGRGVKGQKARSGVSIKGFEGGQMPL) is disordered. Residues 21–35 (RGIGSGKGKTGGRGV) show a composition bias toward gly residues.

Belongs to the universal ribosomal protein uL15 family. Part of the 50S ribosomal subunit.

In terms of biological role, binds to the 23S rRNA. In Methylorubrum extorquens (strain CM4 / NCIMB 13688) (Methylobacterium extorquens), this protein is Large ribosomal subunit protein uL15.